Consider the following 31-residue polypeptide: Potassium channel toxin alpha-KTx 5.5 (31 aa).

Cystine bridges form between cysteine 3–cysteine 21, cysteine 8–cysteine 26, and cysteine 12–cysteine 28. A [R/K]XCQ motif region spans residues 6-9 (RRCE). Histidine 31 is modified (histidine amide).

As to expression, expressed by the venom gland.

The protein resides in the secreted. Its function is as follows. Blocks small conductance calcium-activated potassium channels. This chain is Potassium channel toxin alpha-KTx 5.5, found in Hottentotta tamulus (Eastern Indian scorpion).